Reading from the N-terminus, the 427-residue chain is Lactadherin (427 aa).

The signal sequence occupies residues 1–18; sequence MPCPRLLAALFCSSGLFA. 2 consecutive EGF-like domains span residues 20–59 and 62–106; these read SGDF…LLCN and EHGP…IHCE. 3 disulfides stabilise this stretch: Cys-24-Cys-35, Cys-29-Cys-47, and Cys-49-Cys-58. Ser-27 carries O-linked (Fuc...) serine; in PAS-6 glycosylation. Residue Thr-34 is glycosylated (O-linked (Fuc...) threonine; in PAS-7). The N-linked (GlcNAc...) (hybrid) asparagine; in PAS-6 and PAS-7 glycan is linked to Asn-59. 6 disulfides stabilise this stretch: Cys-66/Cys-77, Cys-71/Cys-94, Cys-96/Cys-105, Cys-109/Cys-265, Cys-252/Cys-256, and Cys-270/Cys-427. The Cell attachment site signature appears at 85–87; the sequence is RGD. 2 consecutive F5/8 type C domains span residues 109-265 and 270-427; these read CTSP…LLGC and CTEP…LLGC. Asn-227 is a glycosylation site (N-linked (GlcNAc...) (high mannose) asparagine; in PAS-6).

Post-translationally, the two O-linked glycans consist of Gal, GlcNAc and Fuc, with probably Fuc as reducing terminal sugar. In terms of tissue distribution, milk and spermatozoan. Also present in epididymis, kidney, heart, lymphatic gland and spleen but not esophagus, small intestine, muscle and liver.

It is found in the membrane. The protein resides in the secreted. Its subcellular location is the cytoplasmic vesicle. The protein localises to the secretory vesicle. It localises to the acrosome membrane. Its function is as follows. Contributes to phagocytic removal of apoptotic cells in many tissues. Plays an important role in the maintenance of intestinal epithelial homeostasis and the promotion of mucosal healing. Promotes VEGF-dependent neovascularization. Specific ligand for the alpha-v/beta-3 and alpha-v/beta-5 receptors. Also binds to phosphatidylserine-enriched cell surfaces in a receptor-independent manner. Zona pellucida-binding protein which may play a role in gamete interaction. This is Lactadherin (MFGE8) from Bos taurus (Bovine).